The following is a 421-amino-acid chain: ATP-dependent RNA helicase RhlB (421 aa).

The Q motif motif lies at glutamine 9–alanine 37. Residues leucine 40–valine 219 enclose the Helicase ATP-binding domain. Alanine 53 to threonine 60 lines the ATP pocket. Residues aspartate 165 to aspartate 168 carry the DEAD box motif. In terms of domain architecture, Helicase C-terminal spans arginine 245 to methionine 390. The interval proline 396–glycine 421 is disordered. A compositionally biased stretch (low complexity) spans serine 402 to proline 414.

The protein belongs to the DEAD box helicase family. RhlB subfamily. As to quaternary structure, component of the RNA degradosome, which is a multiprotein complex involved in RNA processing and mRNA degradation.

It localises to the cytoplasm. It carries out the reaction ATP + H2O = ADP + phosphate + H(+). Its function is as follows. DEAD-box RNA helicase involved in RNA degradation. Has RNA-dependent ATPase activity and unwinds double-stranded RNA. This Salmonella arizonae (strain ATCC BAA-731 / CDC346-86 / RSK2980) protein is ATP-dependent RNA helicase RhlB.